We begin with the raw amino-acid sequence, 96 residues long: Aspartyl/glutamyl-tRNA(Asn/Gln) amidotransferase subunit C (96 aa).

This sequence belongs to the GatC family. As to quaternary structure, heterotrimer of A, B and C subunits.

The enzyme catalyses L-glutamyl-tRNA(Gln) + L-glutamine + ATP + H2O = L-glutaminyl-tRNA(Gln) + L-glutamate + ADP + phosphate + H(+). It carries out the reaction L-aspartyl-tRNA(Asn) + L-glutamine + ATP + H2O = L-asparaginyl-tRNA(Asn) + L-glutamate + ADP + phosphate + 2 H(+). Allows the formation of correctly charged Asn-tRNA(Asn) or Gln-tRNA(Gln) through the transamidation of misacylated Asp-tRNA(Asn) or Glu-tRNA(Gln) in organisms which lack either or both of asparaginyl-tRNA or glutaminyl-tRNA synthetases. The reaction takes place in the presence of glutamine and ATP through an activated phospho-Asp-tRNA(Asn) or phospho-Glu-tRNA(Gln). The chain is Aspartyl/glutamyl-tRNA(Asn/Gln) amidotransferase subunit C from Wolinella succinogenes (strain ATCC 29543 / DSM 1740 / CCUG 13145 / JCM 31913 / LMG 7466 / NCTC 11488 / FDC 602W) (Vibrio succinogenes).